Here is a 414-residue protein sequence, read N- to C-terminus: Probable aminotransferase TAT2 (414 aa).

It belongs to the class-I pyridoxal-phosphate-dependent aminotransferase family. It depends on pyridoxal 5'-phosphate as a cofactor.

The protein is Probable aminotransferase TAT2 of Arabidopsis thaliana (Mouse-ear cress).